A 149-amino-acid chain; its full sequence is Large ribosomal subunit protein bL9 (149 aa).

This sequence belongs to the bacterial ribosomal protein bL9 family.

Binds to the 23S rRNA. The sequence is that of Large ribosomal subunit protein bL9 from Buchnera aphidicola subsp. Cinara cedri (strain Cc).